We begin with the raw amino-acid sequence, 470 residues long: Calcium/manganese antiporter SLC30A10 (470 aa).

The Cytoplasmic portion of the chain corresponds to 1–10 (MGRYSGKTCR). The chain crosses the membrane as a helical span at residues 11–31 (LLFMLVLTAAFFVAELVSGYL). Residues 32 to 34 (GNS) are Extracellular-facing. A helical transmembrane segment spans residues 35-55 (IALLSDSFNMLSDLISLCVGL). Topologically, residues 56–81 (GSGYIARRGPRGSSATYGYVRAEVVG) are cytoplasmic. Residues 82 to 102 (ALSNAVFLTALCFTIFVEAVL) form a helical membrane-spanning segment. Residues 103–113 (RLARPERIDDP) lie on the Extracellular side of the membrane. The helical transmembrane segment at 114-134 (ELVLIVGALGLAVNVVGLLIF) threads the bilayer. The Cytoplasmic portion of the chain corresponds to 135-233 (QDCGACFSRC…KSEALNIRGV (99 aa)). The disordered stretch occupies residues 146–223 (RGRRTRPSQQ…EPEETTKKEK (78 aa)). The segment covering 171-184 (AATATAPGSGTAVT) has biased composition (low complexity). Residues 234–254 (LLHVMGDALGSVVVVITAIIF) form a helical membrane-spanning segment. At 255-270 (YVQPLRREDPCNWQCY) the chain is on the extracellular side. Residues 271-291 (IDPSLTVVMVIIILSSAFPLI) traverse the membrane as a helical segment. Residues 292–470 (KETAVILLQM…RQHYENSTHF (179 aa)) are Cytoplasmic-facing. Residues 300–470 (QMVPKGVNME…RQHYENSTHF (171 aa)) form a required for plasma membrane localization region. A disordered region spans residues 451–470 (QGQTLSKTQERQHYENSTHF). A compositionally biased stretch (basic and acidic residues) spans 458-470 (TQERQHYENSTHF).

Belongs to the cation diffusion facilitator (CDF) transporter (TC 2.A.4) family. SLC30A subfamily. As to quaternary structure, forms homodimers. Forms heterodimers and high-molecular weight oligomers with SLC30A3, SLC30A2 and SLC30A4; heterodimerization is mediated by covalent-bound tyrosine residues, occurs probably in a tissue-specific manner and could mediate the intracellular zinc transport activity into early endosomes and recycling endosomes. As to expression, specifically expressed in fetal liver and fetal brain.

The protein resides in the cell membrane. It is found in the golgi apparatus membrane. Its subcellular location is the recycling endosome membrane. The protein localises to the early endosome membrane. It carries out the reaction Mn(2+)(out) + Ca(2+)(in) = Mn(2+)(in) + Ca(2+)(out). The catalysed reaction is Zn(2+)(in) = Zn(2+)(out). Calcium:manganese antiporter of the plasma membrane mediating the efflux of intracellular manganese coupled to an active extracellular calcium exchange. Required for intracellular manganese homeostasis, an essential cation for the function of several enzymes, including some crucially important for the metabolism of neurotransmitters and other neuronal metabolic pathways. Manganese can also be cytotoxic and induce oxidative stress, mitochondrial dysfunction and apoptosis. Could also have an intracellular zinc ion transporter activity, directly regulating intracellular zinc ion homeostasis and more indirectly various signaling pathway and biological processes. The chain is Calcium/manganese antiporter SLC30A10 from Mus musculus (Mouse).